The following is a 280-amino-acid chain: Pantothenate synthetase (280 aa).

31–38 (MGNLHAGH) serves as a coordination point for ATP. Catalysis depends on histidine 38, which acts as the Proton donor. A (R)-pantoate-binding site is contributed by glutamine 62. Glutamine 62 provides a ligand contact to beta-alanine. 150-153 (GKKD) contacts ATP. A (R)-pantoate-binding site is contributed by glutamine 156. Residues valine 179 and 187–190 (MSSR) contribute to the ATP site.

This sequence belongs to the pantothenate synthetase family. Homodimer.

The protein localises to the cytoplasm. It catalyses the reaction (R)-pantoate + beta-alanine + ATP = (R)-pantothenate + AMP + diphosphate + H(+). It participates in cofactor biosynthesis; (R)-pantothenate biosynthesis; (R)-pantothenate from (R)-pantoate and beta-alanine: step 1/1. Catalyzes the condensation of pantoate with beta-alanine in an ATP-dependent reaction via a pantoyl-adenylate intermediate. This is Pantothenate synthetase from Xanthomonas axonopodis pv. citri (strain 306).